The chain runs to 542 residues: Putative cysteine ligase BshC (542 aa).

Residues 458–479 are a coiled coil; it reads LTKNATLLQAQIDFLHQTLQRA.

The protein belongs to the BshC family.

Its function is as follows. Involved in bacillithiol (BSH) biosynthesis. May catalyze the last step of the pathway, the addition of cysteine to glucosamine malate (GlcN-Mal) to generate BSH. This Geobacillus sp. (strain WCH70) protein is Putative cysteine ligase BshC.